We begin with the raw amino-acid sequence, 1174 residues long: PR domain zinc finger protein 15 (1174 aa).

The SET domain maps to S75–A185. The tract at residues L252–V307 is disordered. Positions A261 to R271 are enriched in basic and acidic residues. A compositionally biased stretch (basic residues) spans P292–A304. C2H2-type zinc fingers lie at residues H402 to H424 and F434 to H457. Residues Y468–H486 form a C2H2-type 3; degenerate zinc finger. 2 consecutive C2H2-type zinc fingers follow at residues F495–H517 and F522–H544. A Glycyl lysine isopeptide (Lys-Gly) (interchain with G-Cter in SUMO2) cross-link involves residue K552. C2H2-type zinc fingers lie at residues S571–H593 and Y598–H620. The disordered stretch occupies residues I639–P658. Positions E644–D655 are enriched in acidic residues. 8 C2H2-type zinc fingers span residues Y661 to H684, H689 to H711, H725 to H747, H753 to H775, Y781 to H803, Y809 to H831, F837 to H859, and W865 to H888. 2 disordered regions span residues A957 to T1007 and L1147 to Y1174. A compositionally biased stretch (basic residues) spans G962–Q973. Over residues A1154–Y1174 the composition is skewed to low complexity.

In terms of tissue distribution, expressed in embryonic stem cells (ESCs) (at protein level).

Its subcellular location is the nucleus. Sequence-specific DNA-binding transcriptional regulator. Plays a role as a molecular node in a transcriptional network regulating embryonic development and cell fate decision. Stimulates the expression of upstream key transcriptional activators and repressors of the Wnt/beta-catenin and MAPK/ERK pathways, respectively, that are essential for naive pluripotency and self-renewal maintenance of embryonic stem cells (ESCs). Specifically promotes SPRY1 and RSPO1 transcription activation through recognition and direct binding of a specific DNA sequence in their promoter regions. Also plays a role in induced pluripotent stem cells (iPSCs) reprogramming. Involved in early embryo development. This Mus musculus (Mouse) protein is PR domain zinc finger protein 15.